A 447-amino-acid chain; its full sequence is Phosphoglucosamine mutase (447 aa).

Catalysis depends on S104, which acts as the Phosphoserine intermediate. Mg(2+) is bound by residues S104, D243, D245, and D247. Residue S104 is modified to Phosphoserine.

It belongs to the phosphohexose mutase family. Mg(2+) serves as cofactor. Activated by phosphorylation.

It carries out the reaction alpha-D-glucosamine 1-phosphate = D-glucosamine 6-phosphate. Catalyzes the conversion of glucosamine-6-phosphate to glucosamine-1-phosphate. This chain is Phosphoglucosamine mutase, found in Corynebacterium efficiens (strain DSM 44549 / YS-314 / AJ 12310 / JCM 11189 / NBRC 100395).